The sequence spans 514 residues: Peptide chain release factor 3 (514 aa).

Positions 8–268 constitute a tr-type G domain; sequence KKRRTFAIIS…TFLEFAPEPH (261 aa). Residues 17-24, 85-89, and 139-142 contribute to the GTP site; these read SHPDAGKT, DTPGH, and NKLD.

It belongs to the TRAFAC class translation factor GTPase superfamily. Classic translation factor GTPase family. PrfC subfamily.

It is found in the cytoplasm. Increases the formation of ribosomal termination complexes and stimulates activities of RF-1 and RF-2. It binds guanine nucleotides and has strong preference for UGA stop codons. It may interact directly with the ribosome. The stimulation of RF-1 and RF-2 is significantly reduced by GTP and GDP, but not by GMP. This Streptococcus pyogenes serotype M18 (strain MGAS8232) protein is Peptide chain release factor 3.